A 199-amino-acid polypeptide reads, in one-letter code: Phosphoheptose isomerase (199 aa).

Residues 36-198 form the SIS domain; that stretch reads MSQCLLNEHK…DRKLIPSSED (163 aa). 51-53 is a binding site for substrate; it reads NGG. Residues His60 and Glu64 each contribute to the Zn(2+) site. Residues Glu64, 93–94, 119–121, Ser124, and Gln174 contribute to the substrate site; these read ND and STS. Zn(2+) contacts are provided by Gln174 and His182.

The protein belongs to the SIS family. GmhA subfamily. Homotetramer. Zn(2+) serves as cofactor.

The protein localises to the cytoplasm. The enzyme catalyses 2 D-sedoheptulose 7-phosphate = D-glycero-alpha-D-manno-heptose 7-phosphate + D-glycero-beta-D-manno-heptose 7-phosphate. It functions in the pathway carbohydrate biosynthesis; D-glycero-D-manno-heptose 7-phosphate biosynthesis; D-glycero-alpha-D-manno-heptose 7-phosphate and D-glycero-beta-D-manno-heptose 7-phosphate from sedoheptulose 7-phosphate: step 1/1. Functionally, catalyzes the isomerization of sedoheptulose 7-phosphate in D-glycero-D-manno-heptose 7-phosphate. In Coxiella burnetii (strain RSA 331 / Henzerling II), this protein is Phosphoheptose isomerase.